A 302-amino-acid chain; its full sequence is Segregation and condensation protein A (302 aa).

It belongs to the ScpA family. Component of a cohesin-like complex composed of ScpA, ScpB and the Smc homodimer, in which ScpA and ScpB bind to the head domain of Smc. The presence of the three proteins is required for the association of the complex with DNA.

It localises to the cytoplasm. Its function is as follows. Participates in chromosomal partition during cell division. May act via the formation of a condensin-like complex containing Smc and ScpB that pull DNA away from mid-cell into both cell halves. The chain is Segregation and condensation protein A from Xylella fastidiosa (strain 9a5c).